Here is a 291-residue protein sequence, read N- to C-terminus: Pantothenate synthetase (291 aa).

An ATP-binding site is contributed by 30–37 (MGYLHVGH). His37 (proton donor) is an active-site residue. Gln61 is a binding site for (R)-pantoate. Gln61 is a binding site for beta-alanine. 147-150 (GEKD) provides a ligand contact to ATP. Gln153 is a binding site for (R)-pantoate. ATP contacts are provided by residues Val176 and 184–187 (CSSR).

Belongs to the pantothenate synthetase family. In terms of assembly, homodimer.

Its subcellular location is the cytoplasm. It carries out the reaction (R)-pantoate + beta-alanine + ATP = (R)-pantothenate + AMP + diphosphate + H(+). It functions in the pathway cofactor biosynthesis; (R)-pantothenate biosynthesis; (R)-pantothenate from (R)-pantoate and beta-alanine: step 1/1. Its function is as follows. Catalyzes the condensation of pantoate with beta-alanine in an ATP-dependent reaction via a pantoyl-adenylate intermediate. The sequence is that of Pantothenate synthetase from Rhizobium meliloti (strain 1021) (Ensifer meliloti).